Reading from the N-terminus, the 143-residue chain is Ribonuclease P protein component 2 (143 aa).

This sequence belongs to the eukaryotic/archaeal RNase P protein component 2 family. As to quaternary structure, consists of a catalytic RNA component and at least 4-5 protein subunits.

It localises to the cytoplasm. The catalysed reaction is Endonucleolytic cleavage of RNA, removing 5'-extranucleotides from tRNA precursor.. Part of ribonuclease P, a protein complex that generates mature tRNA molecules by cleaving their 5'-ends. This Saccharolobus islandicus (strain L.S.2.15 / Lassen #1) (Sulfolobus islandicus) protein is Ribonuclease P protein component 2.